The sequence spans 537 residues: MKIAIEGCAHGELERIYDTIACIEKESNTKIDLLLCCGDFQSTRNLEDLQTMAVPKKYLDICTFYKYYSGECVAPVLTIFIGGNHEASNYLQELPYGGWVAPNIYYLGYAGVVNVNGVRIAGISGIYKGHDFLRGHHEFPPYTESTCRSVYHVRQLEVFRLKQLSGKIDIFLSHDWPTGIYEYGNKAQLLRKKPYFAADMESGQLGSRPLEELLKAVQPSYWFAAHLHCKFAALVPHQNATKAPTKMGDGSSSSSSSSSSESDDEESTSRLPPKPVAVTKFLALDKCLPRRAFLQVLDIPSEAIEGNPTFEYDAEWLVILQSTNHLISVKENYYYLPGKKAGAIAERFNFTPTEEELDSLTTKFQSLKIPENFQRTVPAFDPQEQSNYKHMVVGQPTAHLNPQSNTFCSVLGVDDPLCLALLANGKDLPAVADQCQDQEPIEGSSPPPEPLVTPSKRKLNLFLPAPTVTADATAAEKDDSVIDLPEEDEDPKTAETAESEAVDNPKVKAVPPPPSSPPSVKKLKRRNQNIYQAEDDD.

Positions 8, 10, 39, and 84 each coordinate a divalent metal cation. Positions 124-154 (SGIYKGHDFLRGHHEFPPYTESTCRSVYHVR) are lariat recognition loop. 3 residues coordinate a divalent metal cation: His-174, His-226, and His-228. Disordered regions lie at residues 242-272 (KAPT…SRLP) and 473-537 (TAAE…EDDD). The span at 251–260 (SSSSSSSSSS) shows a compositional bias: low complexity.

The protein belongs to the lariat debranching enzyme family. Fe(2+) is required as a cofactor. Requires Zn(2+) as cofactor. Mn(2+) serves as cofactor.

It localises to the nucleus. Active in presence of diverse metals including Fe(2+), Zn(2+), Mn(2+). Binds two metal cations in two adjacent alpha and beta metal-binding pockets. In terms of biological role, cleaves the 2'-5' phosphodiester linkage at the branch point of lariat intron pre-mRNAs after splicing and converts them into linear molecules that are subsequently degraded. It thereby facilitates ribonucleotide turnover. This Drosophila pseudoobscura pseudoobscura (Fruit fly) protein is Lariat debranching enzyme (DBR1).